A 548-amino-acid chain; its full sequence is Probable malate:quinone oxidoreductase (548 aa).

Positions 522 to 548 are disordered; it reads KPQAADSTPKAQLKPQPARKEVADIAL. Basic and acidic residues predominate over residues 539 to 548; the sequence is ARKEVADIAL.

Belongs to the MQO family. The cofactor is FAD.

The catalysed reaction is (S)-malate + a quinone = a quinol + oxaloacetate. Its pathway is carbohydrate metabolism; tricarboxylic acid cycle; oxaloacetate from (S)-malate (quinone route): step 1/1. The protein is Probable malate:quinone oxidoreductase of Escherichia fergusonii (strain ATCC 35469 / DSM 13698 / CCUG 18766 / IAM 14443 / JCM 21226 / LMG 7866 / NBRC 102419 / NCTC 12128 / CDC 0568-73).